The primary structure comprises 174 residues: Secretory-abundant heat soluble protein 68234 (174 aa).

Residues 1–19 (MARFLVALALFGVVAMTAA) form the signal peptide. The SAHS-c1 stretch occupies residues 26 to 57 (EWSGKPWLGKFVAEVTDKSENWEAFVDALGLP). An SAHS-c2 region spans residues 72–100 (YKQGDHYHHIFALPDKNFEKDIEFTLGQE). The segment at 113-162 (KYSEDGEKLVADVSIPTKGKTIRSEYEVQGDQLIKTYKTGDIVAKKWFKK) is SAHS-c3.

The protein belongs to the Secretory-abundant heat soluble protein (SAHS) family.

The protein localises to the secreted. Secreted heat soluble protein acting as a molecular shield in water-deficient condition. Tardigrade-specific intrinsically disordered proteins (TDPs) are essential for desiccation tolerance by forming non-crystalline amorphous solids upon desiccation, and this vitrified state mirrors their protective capabilities. The polypeptide is Secretory-abundant heat soluble protein 68234 (Hypsibius exemplaris (Freshwater tardigrade)).